Reading from the N-terminus, the 230-residue chain is Heptaprenylglyceryl phosphate synthase (230 aa).

Lys12 is a sn-glycerol 1-phosphate binding site. Asp14 and Thr40 together coordinate Mg(2+). Residues 159–164, Gly189, and 209–210 each bind sn-glycerol 1-phosphate; these read YIEYSG and GD.

Belongs to the GGGP/HepGP synthase family. Group I subfamily. In terms of assembly, homodimer. Mg(2+) serves as cofactor.

The catalysed reaction is sn-glycerol 1-phosphate + all-trans-heptaprenyl diphosphate = 3-heptaprenyl-sn-glycero-1-phosphate + diphosphate. The protein operates within membrane lipid metabolism; glycerophospholipid metabolism. In terms of biological role, prenyltransferase that catalyzes in vivo the transfer of the heptaprenyl moiety of heptaprenyl pyrophosphate (HepPP; 35 carbon atoms) to the C3 hydroxyl of sn-glycerol-1-phosphate (G1P), producing heptaprenylglyceryl phosphate (HepGP). This reaction is an ether-bond-formation step in the biosynthesis of archaea-type G1P-based membrane lipids found in Bacillales. The sequence is that of Heptaprenylglyceryl phosphate synthase from Staphylococcus aureus (strain bovine RF122 / ET3-1).